We begin with the raw amino-acid sequence, 131 residues long: Translation initiation factor 5A (131 aa).

Residue lysine 36 is modified to Hypusine.

The protein belongs to the eIF-5A family. In terms of processing, the N-terminus is blocked.

Its subcellular location is the cytoplasm. Its function is as follows. Functions by promoting the formation of the first peptide bond. This Sulfolobus acidocaldarius (strain ATCC 33909 / DSM 639 / JCM 8929 / NBRC 15157 / NCIMB 11770) protein is Translation initiation factor 5A (eif5a).